The primary structure comprises 101 residues: Putative membrane protein insertion efficiency factor (101 aa).

The protein belongs to the UPF0161 family.

The protein localises to the cell inner membrane. In terms of biological role, could be involved in insertion of integral membrane proteins into the membrane. This is Putative membrane protein insertion efficiency factor from Methylobacterium sp. (strain 4-46).